The following is an 88-amino-acid chain: ATP synthase F(0) complex subunit f, mitochondrial (88 aa).

Ala2 is subject to N-acetylalanine. Ser3 bears the Phosphoserine mark. An N6-acetyllysine modification is found at Lys16. Residues 62-79 (MVLAAYVFLNYCRSYKEL) form a helical membrane-spanning segment.

As to quaternary structure, component of the ATP synthase complex composed at least of ATP5F1A/subunit alpha, ATP5F1B/subunit beta, ATP5MC1/subunit c (homooctomer), MT-ATP6/subunit a, MT-ATP8/subunit 8, ATP5ME/subunit e, ATP5MF/subunit f, ATP5MG/subunit g, ATP5MK/subunit k, ATP5MJ/subunit j, ATP5F1C/subunit gamma, ATP5F1D/subunit delta, ATP5F1E/subunit epsilon, ATP5PF/subunit F6, ATP5PB/subunit b, ATP5PD/subunit d, ATP5PO/subunit OSCP. ATP synthase complex consists of a soluble F(1) head domain (subunits alpha(3) and beta(3)) - the catalytic core - and a membrane F(0) domain - the membrane proton channel (subunits c, a, 8, e, f, g, k and j). These two domains are linked by a central stalk (subunits gamma, delta, and epsilon) rotating inside the F1 region and a stationary peripheral stalk (subunits F6, b, d, and OSCP).

It localises to the mitochondrion. The protein localises to the mitochondrion inner membrane. Its function is as follows. Subunit f, of the mitochondrial membrane ATP synthase complex (F(1)F(0) ATP synthase or Complex V) that produces ATP from ADP in the presence of a proton gradient across the membrane which is generated by electron transport complexes of the respiratory chain. ATP synthase complex consist of a soluble F(1) head domain - the catalytic core - and a membrane F(1) domain - the membrane proton channel. These two domains are linked by a central stalk rotating inside the F(1) region and a stationary peripheral stalk. During catalysis, ATP synthesis in the catalytic domain of F(1) is coupled via a rotary mechanism of the central stalk subunits to proton translocation. In vivo, can only synthesize ATP although its ATP hydrolase activity can be activated artificially in vitro. Part of the complex F(0) domain. In Bos taurus (Bovine), this protein is ATP synthase F(0) complex subunit f, mitochondrial.